The chain runs to 211 residues: Large ribosomal subunit protein uL4 (211 aa).

Positions Lys-48–Gly-89 are disordered.

The protein belongs to the universal ribosomal protein uL4 family. Part of the 50S ribosomal subunit.

Its function is as follows. One of the primary rRNA binding proteins, this protein initially binds near the 5'-end of the 23S rRNA. It is important during the early stages of 50S assembly. It makes multiple contacts with different domains of the 23S rRNA in the assembled 50S subunit and ribosome. In terms of biological role, forms part of the polypeptide exit tunnel. This Desulfotalea psychrophila (strain LSv54 / DSM 12343) protein is Large ribosomal subunit protein uL4.